Reading from the N-terminus, the 641-residue chain is Choline O-acetyltransferase (641 aa).

Serine 17 is modified (phosphoserine). The active-site Proton acceptor is histidine 335. A Phosphoserine modification is found at serine 366. CoA is bound by residues 413–425 (GKTFIKKQKCSPD), serine 451, and glutamine 552. Positions 615-641 (CSSRQPADSKPPTAKERARGPSQAKQS) are disordered.

The protein belongs to the carnitine/choline acetyltransferase family.

The catalysed reaction is choline + acetyl-CoA = acetylcholine + CoA. Functionally, catalyzes the reversible synthesis of acetylcholine (ACh) from acetyl CoA and choline at cholinergic synapses. In Mus musculus (Mouse), this protein is Choline O-acetyltransferase (Chat).